The following is a 461-amino-acid chain: Elongation factor 1-alpha, oocyte form (461 aa).

Glycine 2 is subject to N,N,N-trimethylglycine. The tr-type G domain maps to 5-242; the sequence is KIHINIVVIG…DCIIPPQRPT (238 aa). The tract at residues 14-21 is G1; it reads GHVDSGKS. 14–21 provides a ligand contact to GTP; that stretch reads GHVDSGKS. The interval 70 to 74 is G2; the sequence is GITID. Residues 91–94 form a G3 region; that stretch reads DAPG. Residues 91-95 and 153-156 each bind GTP; these read DAPGH and NKMD. The interval 153-156 is G4; sequence NKMD. The interval 194-196 is G5; that stretch reads SGW. Glutamate 301 and glutamate 374 each carry 5-glutamyl glycerylphosphorylethanolamine.

This sequence belongs to the TRAFAC class translation factor GTPase superfamily. Classic translation factor GTPase family. EF-Tu/EF-1A subfamily. Oocyte.

The protein resides in the cytoplasm. This protein promotes the GTP-dependent binding of aminoacyl-tRNA to the A-site of ribosomes during protein biosynthesis. The protein is Elongation factor 1-alpha, oocyte form of Xenopus laevis (African clawed frog).